Consider the following 2061-residue polypeptide: Putative PWWP domain-containing DNA repair factor 4 (2061 aa).

Disordered regions lie at residues 101–211 (TNLG…SRAR), 382–408 (ALGR…RSSV), 541–586 (TPGT…GDGS), 668–694 (PATL…GDGS), 864–910 (PTPG…SERS), 1046–1072 (PGTM…GDRS), 1159–1182 (ALHG…RGDS), 1205–1383 (KAIA…RDDK), 1521–1548 (PGAL…DSSP), and 1602–1726 (KKGK…KLAN). Composition is skewed to basic and acidic residues over residues 133–153 (PRED…KREN) and 162–173 (ESKRALRDDRSQ). Residues 397–408 (TPGTLQGNRSSV) show a composition bias toward polar residues. The span at 1051 to 1061 (GDSSTARTATA) shows a compositional bias: polar residues. Polar residues predominate over residues 1364 to 1373 (DSSQVHTTIA). Positions 1639-1648 (LKEETQDSRP) are enriched in basic and acidic residues. Positions 1656–1665 (PESSPFSGNI) are enriched in polar residues. In terms of domain architecture, PWWP spans 1756–1817 (RGTMVWFKFQ…KHLDCKEKEK (62 aa)).

Belongs to the PWWP3A family.

The sequence is that of Putative PWWP domain-containing DNA repair factor 4 from Homo sapiens (Human).